The sequence spans 318 residues: Xanthocillin biosynthesis cluster transcription factor xanC (318 aa).

Residues 1–27 (MHSQTTKDEQSKDDSSNEKQDAIERRR) are compositionally biased toward basic and acidic residues. A disordered region spans residues 1-39 (MHSQTTKDEQSKDDSSNEKQDAIERRRLQNRLSQRNHRR). Positions 20-52 (QDAIERRRLQNRLSQRNHRRKIRDRIAKLQERV) constitute a bZIP domain. The segment at 25-40 (RRRLQNRLSQRNHRRK) is basic motif. Positions 41–48 (IRDRIAKL) are leucine-zipper. Disordered regions lie at residues 71–107 (PPAA…QRNV), 123–171 (PSSS…FSLD), and 269–318 (GRHC…SMML). Composition is skewed to low complexity over residues 123–139 (PSSS…PFDL) and 147–171 (STNS…FSLD). Over residues 293–318 (APSSTPFCPLHPSQSSSLDNYQSMML) the composition is skewed to polar residues.

It belongs to the bZIP family.

The protein localises to the nucleus. Transcription regulator that specifically up-regulates the gene cluster that mediates the biosynthesis of the isocyanide xanthocillin and its derivatives. This is Xanthocillin biosynthesis cluster transcription factor xanC from Aspergillus fumigatus (strain ATCC MYA-4609 / CBS 101355 / FGSC A1100 / Af293) (Neosartorya fumigata).